The following is a 300-amino-acid chain: FeMo cofactor biosynthesis protein NifB (300 aa).

The Radical SAM core domain maps to 24–266; sequence HDKVGRVHLP…PQFRACGQCR (243 aa). [4Fe-4S] cluster contacts are provided by cysteine 38, cysteine 42, and cysteine 45. The S-adenosyl-L-methionine site is built by glycine 93, threonine 144, and isoleucine 196. [4Fe-4S] cluster contacts are provided by cysteine 262 and cysteine 265.

The protein belongs to the radical SAM superfamily. NifB family. Monomer. [4Fe-4S] cluster is required as a cofactor.

The protein operates within cofactor biosynthesis; Fe-Mo cofactor biosynthesis. In terms of biological role, involved in the biosynthesis of the iron-molybdenum cofactor (FeMo-co or M-cluster) found in the dinitrogenase enzyme of the nitrogenase complex in nitrogen-fixing microorganisms. NifB catalyzes the crucial step of radical SAM-dependent carbide insertion that occurs concomitant with the insertion of a 9th sulfur and the rearrangement/coupling of two [4Fe-4S] clusters into a [8Fe-9S-C] cluster, the precursor to the M-cluster. The polypeptide is FeMo cofactor biosynthesis protein NifB (Methanocaldococcus jannaschii (strain ATCC 43067 / DSM 2661 / JAL-1 / JCM 10045 / NBRC 100440) (Methanococcus jannaschii)).